A 275-amino-acid chain; its full sequence is Elongation factor Ts (275 aa).

An involved in Mg(2+) ion dislocation from EF-Tu region spans residues 76 to 79 (TDFV).

It belongs to the EF-Ts family.

Its subcellular location is the cytoplasm. Associates with the EF-Tu.GDP complex and induces the exchange of GDP to GTP. It remains bound to the aminoacyl-tRNA.EF-Tu.GTP complex up to the GTP hydrolysis stage on the ribosome. This Salinispora tropica (strain ATCC BAA-916 / DSM 44818 / JCM 13857 / NBRC 105044 / CNB-440) protein is Elongation factor Ts.